Consider the following 95-residue polypeptide: Secretoglobin family 1C member 1 (95 aa).

The N-terminal stretch at 1-23 (MKGSSALLLVALSLLCVCGLTRA) is a signal peptide.

It belongs to the secretoglobin family.

The protein localises to the secreted. This Mus musculus (Mouse) protein is Secretoglobin family 1C member 1 (Scgb1c1).